Consider the following 248-residue polypeptide: Oligo(A)/oligo(T)-binding protein (248 aa).

Residues 1 to 36 (MAKTLAQGRKPGSGRKPGKGKTLREGRKPGSGRRRR) mediate DNA binding. 2 disordered regions span residues 1 to 127 (MAKT…LQQQ) and 219 to 248 (TAAS…NATI). A run of 3 repeats spans residues 8–12 (GRKPG), 14–18 (GRKPG), and 26–30 (GRKPG). Positions 8 to 30 (GRKPGSGRKPGKGKTLREGRKPG) are 3 X 5 AA repeats of G-R-K-P-G. Residues 12–21 (GSGRKPGKGK) are compositionally biased toward basic residues. The segment covering 37 to 71 (QDTGGKETDGSQQDQESRLISSRDMEAVDALRELT) has biased composition (basic and acidic residues). 2 stretches are compositionally biased toward low complexity: residues 72–100 (HSPS…LPPS) and 111–127 (QQQQ…LQQQ).

Binds as a dimer or higher oligomer.

Its function is as follows. DNA-binding protein that recognizes oligo(A).oligo(T) tracts (A.T DNA). Can bind to any 11 bp sequence in which 10 bases conform to an uninterrupted oligo(A).oligo(T) tract. This is Oligo(A)/oligo(T)-binding protein (DAT1) from Saccharomyces cerevisiae (strain ATCC 204508 / S288c) (Baker's yeast).